The following is a 709-amino-acid chain: Polyribonucleotide nucleotidyltransferase (709 aa).

The Mg(2+) site is built by Asp-489 and Asp-495. The KH domain maps to 556-615; that stretch reads PKIDMIKIDVDKIKVVIGKGGETIDKIIAETGVKIDIDEEGNVSIFSSDQAAIDRTKDII. An S1 motif domain is found at 625–693; sequence GEVYHAKVVR…DKGRVDASMK (69 aa).

This sequence belongs to the polyribonucleotide nucleotidyltransferase family. The cofactor is Mg(2+).

It is found in the cytoplasm. It catalyses the reaction RNA(n+1) + phosphate = RNA(n) + a ribonucleoside 5'-diphosphate. Involved in mRNA degradation. Catalyzes the phosphorolysis of single-stranded polyribonucleotides processively in the 3'- to 5'-direction. The protein is Polyribonucleotide nucleotidyltransferase of Streptococcus agalactiae serotype III (strain NEM316).